Consider the following 83-residue polypeptide: MEKLLLFATIILCVKADEICIGYLSNNSTDKVDTIIENNVTVTSSVELLETEHTGSFCSINGKQPTSLRDCSFAGWILGNPQC.

The signal sequence occupies residues 1–16 (MEKLLLFATIILCVKA). 3 N-linked (GlcNAc...) asparagine; by host glycosylation sites follow: Asn26, Asn27, and Asn39. Cys71 and Cys83 form a disulfide bridge.

It belongs to the influenza viruses hemagglutinin family. Homotrimer of disulfide-linked HA1-HA2. In natural infection, inactive HA is matured into HA1 and HA2 outside the cell by one or more trypsin-like, arginine-specific endoprotease secreted by the bronchial epithelial cells. One identified protease that may be involved in this process is secreted in lungs by club cells. In terms of processing, palmitoylated.

Its subcellular location is the virion membrane. The protein localises to the host apical cell membrane. Binds to sialic acid-containing receptors on the cell surface, bringing about the attachment of the virus particle to the cell. This attachment induces virion internalization of about two third of the virus particles through clathrin-dependent endocytosis and about one third through a clathrin- and caveolin-independent pathway. Plays a major role in the determination of host range restriction and virulence. Class I viral fusion protein. Responsible for penetration of the virus into the cell cytoplasm by mediating the fusion of the membrane of the endocytosed virus particle with the endosomal membrane. Low pH in endosomes induces an irreversible conformational change in HA2, releasing the fusion hydrophobic peptide. Several trimers are required to form a competent fusion pore. This is Hemagglutinin (HA) from Influenza A virus (strain A/Tern/Australia/G70C/1975 H11N9).